Consider the following 462-residue polypeptide: Glycerol-3-phosphate dehydrogenase [NAD(+)] GPDHC1, cytosolic (462 aa).

NAD(+)-binding positions include 48 to 53 (GAGAWG), K196, and A235. K196 contacts substrate. The Proton acceptor role is filled by K285. Residues R347 and Q375 each coordinate NAD(+). Position 347–348 (347–348 (RN)) interacts with substrate.

This sequence belongs to the NAD-dependent glycerol-3-phosphate dehydrogenase family. Expressed in roots, leaves, flowers and siliques.

Its subcellular location is the cytoplasm. It localises to the cytosol. The catalysed reaction is sn-glycerol 3-phosphate + NAD(+) = dihydroxyacetone phosphate + NADH + H(+). In terms of biological role, involved in cell redox homeostasis. Required for maintaining a steady state cellular NADH/NAD(+) ratio through a mitochondrial glycerol-3-phosphate redox shuttle. May function with the mitochondrial FAD-dependent glycerol-3-phosphate dehydrogenase SDP6 to shuttle reducing equivalents into the mitochondria for respiration. The protein is Glycerol-3-phosphate dehydrogenase [NAD(+)] GPDHC1, cytosolic (GPDHC1) of Arabidopsis thaliana (Mouse-ear cress).